A 511-amino-acid chain; its full sequence is TNF receptor-associated factor family protein DDB_G0290931 (511 aa).

An RING-type; degenerate zinc finger spans residues 27–67 (CPICFELIYKKSIYQCSSGHYACQECWEKSLEIKQECMICR). The stretch at 103–169 (IDGANQENED…RKLIKDEENG (67 aa)) forms a coiled coil. The segment at 107 to 159 (NQENEDEENEDEENEDDEDENEDEENGEDDEDKDEDEENENENEENKDEENEK) is disordered. Acidic residues predominate over residues 109 to 155 (ENEDEENEDEENEDDEDENEDEENGEDDEDKDEDEENENENEENKDE). 2 TRAF-type zinc fingers span residues 181-234 (RHIQ…QVQL) and 236-293 (NHYD…SELQ). A coiled-coil region spans residues 324–358 (ELLLKEIEKSKITCSELQRKNDELSSLITEIDDNY). One can recognise an MATH domain in the interval 374–499 (GYTNKWIISN…DDKLTINIYV (126 aa)).

Belongs to the TNF receptor-associated factor family. A subfamily.

It localises to the cytoplasm. In terms of biological role, probable adapter protein and signal transducer that links members of the tumor necrosis factor receptor family to different signaling pathways by association with the receptor cytoplasmic domain and kinases. The protein is TNF receptor-associated factor family protein DDB_G0290931 of Dictyostelium discoideum (Social amoeba).